The chain runs to 1048 residues: Calcium-transporting ATPase, endoplasmic reticulum-type (1048 aa).

At 1–63 the chain is on the cytoplasmic side; it reads MEEKPFPAWS…WRLVLEQFDD (63 aa). The chain crosses the membrane as a helical span at residues 64–84; the sequence is TLVKILLGAAFISFVLAYVNQ. At 85 to 93 the chain is on the lumenal side; sequence DETGESGFE. The chain crosses the membrane as a helical span at residues 94–114; sequence AYVEPLVILWILVLNAIVGVW. The Cytoplasmic segment spans residues 115–213; it reads QESNAEKALE…DCELQAKENM (99 aa). Residues 214-234 form a helical membrane-spanning segment; the sequence is VFAGTTVVNGSCICIVVNTGM. The Lumenal segment spans residues 235 to 267; it reads CTEIGKIQRQIHDASMEESDTPLKKKLDEFGNR. Residues 268–288 traverse the membrane as a helical segment; sequence LTFAIGVVCLVVWAINYKYFL. The Cytoplasmic portion of the chain corresponds to 289–312; it reads SWEVVDDWPSDFRFSFEKCAYYFK. The helical transmembrane segment at 313-333 threads the bilayer; that stretch reads IAVALAVAAIPEGLPSVITTC. Ca(2+)-binding residues include valine 319, alanine 320, isoleucine 322, and glutamate 324. Residues 334–800 lie on the Lumenal side of the membrane; it reads LALGTRKMAQ…ISSNVGEVIS (467 aa). Catalysis depends on aspartate 366, which acts as the 4-aspartylphosphate intermediate. Positions 728 and 732 each coordinate Mg(2+). Ca(2+) contacts are provided by asparagine 794 and glutamate 797. A helical transmembrane segment spans residues 801–821; that stretch reads IFLTAVLGIPECLIPVQLLWV. Asparagine 822, threonine 825, and aspartate 826 together coordinate Ca(2+). Topologically, residues 822-862 are cytoplasmic; sequence NLVTDGPPATALGFNPADVDIMQKPPRKNTDALINSWVFFR. Residues 863–883 form a helical membrane-spanning segment; sequence YMVIGSYVGIATVGIFIVWYT. Residues 884–944 lie on the Lumenal side of the membrane; the sequence is QASFLGINIV…CEYFTVGKVK (61 aa). A helical membrane pass occupies residues 945-965; sequence AMTLSLSVLVAIEMFNSLNAL. Glutamate 957 provides a ligand contact to Ca(2+). Residues 966–981 are Cytoplasmic-facing; that stretch reads SEDNSLIKMPPWRNPW. A helical membrane pass occupies residues 982-1002; it reads LLVAMSLSFALHSVILYVPFL. Residues 1003–1007 lie on the Lumenal side of the membrane; the sequence is ADIFG. A helical membrane pass occupies residues 1008 to 1028; the sequence is IVPLSLYEWLLVILLSAPVIL. The Cytoplasmic segment spans residues 1029 to 1048; that stretch reads IDEVLKFVGRRRRRTKLKAA.

Belongs to the cation transport ATPase (P-type) (TC 3.A.3) family. Type IIA subfamily. In terms of tissue distribution, 9-fold higher level in roots compared with leaves.

The protein localises to the endoplasmic reticulum membrane. The enzyme catalyses Ca(2+)(in) + ATP + H2O = Ca(2+)(out) + ADP + phosphate + H(+). Functionally, this magnesium-dependent enzyme catalyzes the hydrolysis of ATP coupled with the translocation of calcium from the cytosol to an endomembrane compartment. The chain is Calcium-transporting ATPase, endoplasmic reticulum-type from Solanum lycopersicum (Tomato).